A 561-amino-acid polypeptide reads, in one-letter code: Cytosolic purine 5'-nucleotidase (561 aa).

Aspartate 52 functions as the Nucleophile in the catalytic mechanism. GMP is bound by residues aspartate 52 and aspartate 54. The IMP site is built by aspartate 52 and aspartate 54. Positions 52 and 54 each coordinate Mg(2+). Catalysis depends on aspartate 54, which acts as the Proton donor. A (2R)-2,3-bisphosphoglycerate-binding site is contributed by arginine 144. Residues arginine 144 and asparagine 154 each coordinate ATP. 2 residues coordinate dATP: arginine 144 and asparagine 154. Asparagine 154 lines the adenosine pocket. Asparagine 154 serves as a coordination point for P(1),P(4)-bis(5'-adenosyl) tetraphosphate. Arginine 202, aspartate 206, lysine 215, threonine 249, and asparagine 250 together coordinate GMP. IMP-binding residues include arginine 202, aspartate 206, lysine 215, threonine 249, asparagine 250, serine 251, and lysine 292. Lysine 292 provides a ligand contact to GMP. Aspartate 351 contributes to the Mg(2+) binding site. Position 362 (lysine 362) interacts with (2R)-2,3-bisphosphoglycerate. Residue lysine 362 coordinates P(1),P(4)-bis(5'-adenosyl) tetraphosphate. Residue serine 418 is modified to Phosphoserine. Adenosine contacts are provided by methionine 436 and glutamine 453. Glutamine 453 and arginine 456 together coordinate ATP. Glutamine 453 and arginine 456 together coordinate dATP. Position 453 (glutamine 453) interacts with P(1),P(4)-bis(5'-adenosyl) tetraphosphate. Tyrosine 457 is a binding site for (2R)-2,3-bisphosphoglycerate. Tyrosine 457 lines the P(1),P(4)-bis(5'-adenosyl) tetraphosphate pocket. Phosphoserine occurs at positions 502, 511, and 527. Positions 538–561 (PLAPQEITHCHDEDDDEEEEEEEE) are disordered. The interval 548 to 561 (HDEDDDEEEEEEEE) is required for tetramer assembly. Over residues 550-561 (EDDDEEEEEEEE) the composition is skewed to acidic residues.

Belongs to the 5'(3')-deoxyribonucleotidase family. In terms of assembly, homotetramer. It depends on Mg(2+) as a cofactor. Widely expressed.

Its subcellular location is the cytoplasm. The protein localises to the cytosol. It carries out the reaction a ribonucleoside 5'-phosphate + H2O = a ribonucleoside + phosphate. The enzyme catalyses a 2'-deoxyribonucleoside + a ribonucleoside 5'-phosphate = a ribonucleoside + a 2'-deoxyribonucleoside 5'-phosphate. The catalysed reaction is IMP + H2O = inosine + phosphate. It catalyses the reaction GMP + H2O = guanosine + phosphate. It carries out the reaction dIMP + H2O = 2'-deoxyinosine + phosphate. The enzyme catalyses dGMP + H2O = 2'-deoxyguanosine + phosphate. The catalysed reaction is XMP + H2O = xanthosine + phosphate. It catalyses the reaction inosine + GMP = guanosine + IMP. It carries out the reaction dGMP + inosine = 2'-deoxyguanosine + IMP. The enzyme catalyses dIMP + inosine = 2'-deoxyinosine + IMP. The catalysed reaction is inosine + UMP = uridine + IMP. It catalyses the reaction inosine + CMP = cytidine + IMP. It carries out the reaction inosine + AMP = IMP + adenosine. Allosterically activated by various compounds including ATP, 2,3-BPG/2,3-Bisphosphoglyceric acid and Ap4A/P1,P4-bis(5'-adenosyl) tetraphosphate. Binding of an allosteric activator is a prerequisiste to magnesium and substrate binding. Inhibited by inorganic phosphate. Broad specificity cytosolic 5'-nucleotidase that catalyzes the dephosphorylation of 6-hydroxypurine nucleoside 5'-monophosphates. In addition, possesses a phosphotransferase activity by which it can transfer a phosphate from a donor nucleoside monophosphate to an acceptor nucleoside, preferably inosine, deoxyinosine and guanosine. Has the highest activities for IMP and GMP followed by dIMP, dGMP and XMP. Could also catalyze the transfer of phosphates from pyrimidine monophosphates but with lower efficiency. Through these activities regulates the purine nucleoside/nucleotide pools within the cell. The chain is Cytosolic purine 5'-nucleotidase from Homo sapiens (Human).